An 84-amino-acid chain; its full sequence is Small ribosomal subunit protein uS17 (84 aa).

This sequence belongs to the universal ribosomal protein uS17 family. As to quaternary structure, part of the 30S ribosomal subunit.

One of the primary rRNA binding proteins, it binds specifically to the 5'-end of 16S ribosomal RNA. The protein is Small ribosomal subunit protein uS17 of Glaesserella parasuis serovar 5 (strain SH0165) (Haemophilus parasuis).